We begin with the raw amino-acid sequence, 46 residues long: Antimicrobial peptide eNAP-2 (46 aa).

The region spanning 12–46 (RPGRCPTVPPGTFGHCACLCTGDASEPKGQKCCSN) is the WAP domain.

Functionally, has antibiotic activity against several equine uterine pathogens; S.zooepidemicus, E.coli and P.aeruginosa. Highly efficient against S.zoopedemicus. Not active against K.pneumoniae. Selectively inactivates microbial serine proteases (subtilisin A and proteinase K) without inhibiting mammalian serine proteases (human neutrophil elastase, human cathepsin G and bovine pancreatic trypsin). This is Antimicrobial peptide eNAP-2 from Equus caballus (Horse).